Consider the following 200-residue polypeptide: Glycerol-3-phosphate acyltransferase (200 aa).

The next 5 helical transmembrane spans lie at 1–21 (MITVILIFSAYLLGSISFAVV), 51–71 (VAAAVTLLGDAGKGWVAVVVA), 84–104 (VIASAALAVFLGHLFPIFLAF), 116–136 (ILLGLNLWLGILAILTWIIVA), and 159–179 (FLLQKEMLTITVLIISILLIL).

Belongs to the PlsY family. Probably interacts with PlsX.

The protein localises to the cell inner membrane. The enzyme catalyses an acyl phosphate + sn-glycerol 3-phosphate = a 1-acyl-sn-glycero-3-phosphate + phosphate. It functions in the pathway lipid metabolism; phospholipid metabolism. Functionally, catalyzes the transfer of an acyl group from acyl-phosphate (acyl-PO(4)) to glycerol-3-phosphate (G3P) to form lysophosphatidic acid (LPA). This enzyme utilizes acyl-phosphate as fatty acyl donor, but not acyl-CoA or acyl-ACP. This Nitrosomonas eutropha (strain DSM 101675 / C91 / Nm57) protein is Glycerol-3-phosphate acyltransferase.